The sequence spans 555 residues: Glutamine--tRNA ligase (555 aa).

Positions 35–45 (PEPNGYLHIGH) match the 'HIGH' region motif. ATP contacts are provided by residues 36–38 (EPN) and 42–48 (HIGHAKS). 2 residues coordinate L-glutamine: D68 and Y213. Residues T232 and 262–263 (RL) each bind ATP. A 'KMSKS' region motif is present at residues 269–273 (ITSKR).

The protein belongs to the class-I aminoacyl-tRNA synthetase family. In terms of assembly, monomer.

The protein resides in the cytoplasm. The enzyme catalyses tRNA(Gln) + L-glutamine + ATP = L-glutaminyl-tRNA(Gln) + AMP + diphosphate. This is Glutamine--tRNA ligase from Ectopseudomonas mendocina (strain ymp) (Pseudomonas mendocina).